We begin with the raw amino-acid sequence, 96 residues long: Ubiquitin-related modifier 1 (96 aa).

A 1-thioglycine modification is found at G96. Residue G96 forms a Glycyl lysine isopeptide (Gly-Lys) (interchain with K-? in acceptor proteins) linkage.

The protein belongs to the URM1 family. C-terminal thiocarboxylation occurs in 2 steps, it is first acyl-adenylated (-COAMP) via the hesA/moeB/thiF part of UBA4, then thiocarboxylated (-COSH) via the rhodanese domain of UBA4.

Its subcellular location is the cytoplasm. It participates in tRNA modification; 5-methoxycarbonylmethyl-2-thiouridine-tRNA biosynthesis. Functionally, acts as a sulfur carrier required for 2-thiolation of mcm(5)S(2)U at tRNA wobble positions of cytosolic tRNA(Lys), tRNA(Glu) and tRNA(Gln). Serves as sulfur donor in tRNA 2-thiolation reaction by being thiocarboxylated (-COSH) at its C-terminus by the MOCS3 homolog UBA4. The sulfur is then transferred to tRNA to form 2-thiolation of mcm(5)S(2)U. Prior mcm(5) tRNA modification by the elongator complex is required for 2-thiolation. Also acts as a ubiquitin-like protein (UBL) that is covalently conjugated via an isopeptide bond to lysine residues of target proteins such as AHP1. The thiocarboxylated form serves as substrate for conjugation and oxidative stress specifically induces the formation of UBL-protein conjugates. The chain is Ubiquitin-related modifier 1 from Encephalitozoon cuniculi (strain GB-M1) (Microsporidian parasite).